The sequence spans 70 residues: Large ribosomal subunit protein uL29 (70 aa).

It belongs to the universal ribosomal protein uL29 family.

The chain is Large ribosomal subunit protein uL29 from Thermosynechococcus vestitus (strain NIES-2133 / IAM M-273 / BP-1).